A 300-amino-acid chain; its full sequence is Solute carrier family 25 member 35 (300 aa).

Solcar repeat units follow at residues 1–90 (MDFL…AESR), 100–193 (HSPV…IKDL), and 203–294 (QSWK…LRSF). The next 6 helical transmembrane spans lie at 38-58 (TYQRHYRNVFHAFFTIGKVDG), 59-79 (LAALQKGLGPALLYQFLMNGI), 91-119 (GYLHTNEGTHSPVRSAAAGALAGVMGAYL), 169-190 (AVGGLPRVVIGSSTQLCTFSSI), 205-225 (WKVALAAAMVSGVAIVVAMTP), and 277-300 (LGPHTILSLFFWDQLRSFYNTYAK).

Belongs to the mitochondrial carrier (TC 2.A.29) family.

It is found in the mitochondrion inner membrane. It catalyses the reaction a dicarboxylate(in) + sulfate(out) = a dicarboxylate(out) + sulfate(in). Functionally, putative antiporter that exchanges dicarboxylates and sulfur oxoanions across the inner membrane of mitochondria. In Mus musculus (Mouse), this protein is Solute carrier family 25 member 35 (Slc25a35).